The chain runs to 921 residues: Eukaryotic translation initiation factor 3 subunit A (921 aa).

Residues 319 to 493 (FKFYASQLVL…GVVSFMEDPF (175 aa)) enclose the PCI domain. The segment at 497 to 524 (GGSTATNADDEQRNDDGYEETHVEEEPE) is disordered. A compositionally biased stretch (basic and acidic residues) spans 506–517 (DEQRNDDGYEET). Coiled-coil stretches lie at residues 562–647 (ARNE…NEKT) and 693–868 (ERMS…IKRN). Residues 818-865 (AAKEHDDRQRMLQDRLTKERKERERVNKEKDEAARKQREIEEAVERTI) are compositionally biased toward basic and acidic residues. Residues 818-921 (AAKEHDDRQR…KMKLRRAGRA (104 aa)) form a disordered region. Pro residues predominate over residues 873 to 890 (PAPPVRSAPPARAAPPPR). Residues 903 to 913 (PEKKLTYAEKM) are compositionally biased toward basic and acidic residues.

Belongs to the eIF-3 subunit A family. In terms of assembly, component of the eukaryotic translation initiation factor 3 (eIF-3) complex.

The protein resides in the cytoplasm. RNA-binding component of the eukaryotic translation initiation factor 3 (eIF-3) complex, which is involved in protein synthesis of a specialized repertoire of mRNAs and, together with other initiation factors, stimulates binding of mRNA and methionyl-tRNAi to the 40S ribosome. The eIF-3 complex specifically targets and initiates translation of a subset of mRNAs involved in cell proliferation. This chain is Eukaryotic translation initiation factor 3 subunit A, found in Eremothecium gossypii (strain ATCC 10895 / CBS 109.51 / FGSC 9923 / NRRL Y-1056) (Yeast).